The sequence spans 2495 residues: Zinc finger protein 462 (2495 aa).

3 consecutive C2H2-type zinc fingers follow at residues 4 to 27 (LQCDGCDFRAPSYEDLKAHIQDVH), 108 to 131 (FQCKFCVRYFRSKNLLIEHTRKVH), and 162 to 185 (FSCQFCTYKSPRRARIIKHQKMYH). A Glycyl lysine isopeptide (Lys-Gly) (interchain with G-Cter in SUMO1); alternate cross-link involves residue Lys20. A Glycyl lysine isopeptide (Lys-Gly) (interchain with G-Cter in SUMO2); alternate cross-link involves residue Lys20. The interaction with PBX1 stretch occupies residues 215 to 241 (PCKELPAEVVERSILESMVKPLTKSRG). Residues Lys234 and Lys271 each participate in a glycyl lysine isopeptide (Lys-Gly) (interchain with G-Cter in SUMO2) cross-link. Disordered stretches follow at residues 278–301 (QQEGPNVSEAQNDNEPSPTSNSTY), 329–357 (RPNSSSTSKFSSSMSYPQMKPKSPHNSGL), and 370–395 (DMTNSSADLDTNSMLNDSSSDEDLNE). Residues 332-343 (SSSTSKFSSSMS) are compositionally biased toward low complexity. Glycyl lysine isopeptide (Lys-Gly) (interchain with G-Cter in SUMO2) cross-links involve residues Lys337, Lys348, and Lys350. Phosphoserine occurs at positions 351 and 355. A compositionally biased stretch (polar residues) spans 370–387 (DMTNSSADLDTNSMLNDS). A Glycyl lysine isopeptide (Lys-Gly) (interchain with G-Cter in SUMO2) cross-link involves residue Lys429. 2 consecutive C2H2-type zinc fingers follow at residues 440 to 463 (FQCPFCPFLTMHRRSISRHIENIH) and 471 to 493 (YKCDECPFTCKSSLKLGAHKQCH). Lys485 participates in a covalent cross-link: Glycyl lysine isopeptide (Lys-Gly) (interchain with G-Cter in SUMO2). Residues 492-590 (CHTGTSDWDT…PQPPTQAPPL (99 aa)) form a disordered region. The segment covering 493–502 (HTGTSDWDTV) has biased composition (polar residues). Positions 503–515 (NSQSESLSSSLNE) are enriched in low complexity. Residues 542 to 590 (PPQPPPPLPPPPPPPSQPLPQPPPPPLQSPHQVPPPTQQPQPPTQAPPL) are compositionally biased toward pro residues. The segment at 593–616 (YKCTMCSYSTMTLKGLRVHQQHKH) adopts a C2H2-type 6 zinc-finger fold. Residues Lys624, Lys650, and Lys661 each participate in a glycyl lysine isopeptide (Lys-Gly) (interchain with G-Cter in SUMO2) cross-link. The disordered stretch occupies residues 629–654 (PSSLPLENETDSHPSSSNTVKKSQTS). Polar residues predominate over residues 641–654 (HPSSSNTVKKSQTS). Ser681 bears the Phosphoserine mark. Lys699 is covalently cross-linked (Glycyl lysine isopeptide (Lys-Gly) (interchain with G-Cter in SUMO2)). 3 consecutive C2H2-type zinc fingers follow at residues 835 to 858 (YYCKHCDFNNKSARSVSTHYQRMH), 878 to 900 (YRCLECYIDYTNFEDLQQHYGEH), and 917 to 940 (YRCRFCSYTSPNVRSLMPHYQRMH). Lys978 participates in a covalent cross-link: Glycyl lysine isopeptide (Lys-Gly) (interchain with G-Cter in SUMO2). The interval 980–999 (MATSTPVARGGGLPATFNKN) is disordered. The C2H2-type 10 zinc finger occupies 1023-1046 (YDCDVCSFASPNMHSVLVHYQKKH). At Ser1083 the chain carries Phosphoserine. Lys1128 participates in a covalent cross-link: Glycyl lysine isopeptide (Lys-Gly) (interchain with G-Cter in SUMO2). At Ser1159 the chain carries Phosphoserine. Glycyl lysine isopeptide (Lys-Gly) (interchain with G-Cter in SUMO2) cross-links involve residues Lys1196, Lys1204, Lys1210, and Lys1232. 2 C2H2-type zinc fingers span residues 1254–1277 (LKCRQCSYTSPYFYALRKHIKKDH) and 1459–1482 (YQCTVCQSEYNNLHGLLTHYGKKH). Lys1488 participates in a covalent cross-link: Glycyl lysine isopeptide (Lys-Gly) (interchain with G-Cter in SUMO2). The segment at 1504-1527 (YKCRHCPYINTRIHGVLTHYQKRH) adopts a C2H2-type 13 zinc-finger fold. Residues Lys1560 and Lys1580 each participate in a glycyl lysine isopeptide (Lys-Gly) (interchain with G-Cter in SUMO2) cross-link. 3 consecutive C2H2-type zinc fingers follow at residues 1566–1589 (YRCKLCPYTHGTLEKLKIHYEKYH), 1649–1672 (FRCQLCKYFCSTRKGIARHYRIKH), and 1686–1709 (FKCALCAYTNPIRKGLAAHYQKRH). Residues Lys1687 and Lys1769 each participate in a glycyl lysine isopeptide (Lys-Gly) (interchain with G-Cter in SUMO2) cross-link. Residues 1881-1903 (FQCKHCDSKLQSIAELTSHLNIH) form a C2H2-type 17 zinc finger. A Glycyl lysine isopeptide (Lys-Gly) (interchain with G-Cter in SUMO2) cross-link involves residue Lys1935. Residues 1957–1981 (YKCKFCVEVHPTLRAICNHLRKHVQ) form a C2H2-type 18; degenerate zinc finger. Lys1993 carries the N6-methyllysine modification. 3 C2H2-type zinc fingers span residues 2014 to 2037 (YSCQYCSFVSAFRHNLDRHMQTHH), 2043 to 2066 (FRCKLCSFKSSYNSRLKTHILKAH), and 2072 to 2095 (YKCSWCSFSTMTISQLKEHSLKVH). Lys2093 participates in a covalent cross-link: Glycyl lysine isopeptide (Lys-Gly) (interchain with G-Cter in SUMO2). Polar residues-rich tracts occupy residues 2112–2121 (SHAHPSSQKA) and 2132–2149 (DSSYSEPPDVQQQLNHYQ). The segment at 2112–2172 (SHAHPSSQKA…VPPSGTAAGT (61 aa)) is disordered. Residues Ser2161 and Ser2166 each carry the phosphoserine modification. 3 consecutive C2H2-type zinc fingers follow at residues 2180 to 2203 (LHCEFCEFSSGYIQSIRRHYRDKH), 2209 to 2232 (FKCKDCSFYTGFKSAFTMHVEAGH), and 2243 to 2265 (LRCPLCLYHTKYKRNMIDHIVLH). Lys2282 is covalently cross-linked (Glycyl lysine isopeptide (Lys-Gly) (interchain with G-Cter in SUMO2)). 2 C2H2-type zinc fingers span residues 2289–2311 (FRCDKCTFTCSSDESLQQHIEKH) and 2317–2340 (YKCQLCYYETKHTEELDTHLRDEH). Residues 2361-2387 (KEKIESSSSEDEDKDDEMSSKAEDREL) form a disordered region. Residues 2377 to 2387 (EMSSKAEDREL) show a composition bias toward basic and acidic residues. The C2H2-type 27 zinc finger occupies 2403–2425 (FPCEFCGRAFSQGSEWERHVLRH). Lys2493 participates in a covalent cross-link: Glycyl lysine isopeptide (Lys-Gly) (interchain with G-Cter in SUMO2).

Interacts with PBX1 isoform PBX1b; this interaction prevents PBX1-HOXA9 heterodimer from forming and binding to DNA. Expressed in the cerebral cortex (at protein level). Expressed in embryonic stem cells (at protein level). Expressed in heart, liver, kidney, muscle, and female and male genital tracts (at protein level).

The protein localises to the nucleus. In terms of biological role, zinc finger nuclear factor involved in transcription by regulating chromatin structure and organization. Involved in the pluripotency and differentiation of embryonic stem cells by regulating SOX2, POU5F1/OCT4, and NANOG. By binding PBX1, prevents the heterodimerization of PBX1 and HOXA9 and their binding to DNA. Regulates neuronal development and neural cell differentiation. In Mus musculus (Mouse), this protein is Zinc finger protein 462.